Reading from the N-terminus, the 181-residue chain is Adenine phosphoribosyltransferase (181 aa).

Belongs to the purine/pyrimidine phosphoribosyltransferase family. In terms of assembly, homodimer.

It localises to the cytoplasm. It carries out the reaction AMP + diphosphate = 5-phospho-alpha-D-ribose 1-diphosphate + adenine. The protein operates within purine metabolism; AMP biosynthesis via salvage pathway; AMP from adenine: step 1/1. In terms of biological role, catalyzes a salvage reaction resulting in the formation of AMP, that is energically less costly than de novo synthesis. The protein is Adenine phosphoribosyltransferase of Neorhizobium galegae (Rhizobium galegae).